The chain runs to 611 residues: MASRRARQRLKGGGGGGGGGGDAGPAAEKLEQLGSREAGAEPRPESGNKAGQVWAPEGSTAFKCLLSARLCAALLSNISDCDETFNYWEPTHYLIYGKGFQTWEYSPVYAIRSYAYLLLHAWPAAFHARILQTNKILVFYFLRCLLAFVSCVCELYFYKAVCKKFGLHVSRMMLAFLVLSTGMFCSSSAFLPSSFCMYTTLIAMTGWYMDKTPIAVLGVAAGAILGWPFSAALGLPIAFDLLARKHRWKSFLLWSLVALALFLVPVVVIDSYYYGKLVVAPLNIVLYNVFTSHGPDLYGTEPWYFYLINGFLNFNVAFALALLVLPLTFLMEYLLQRFHVQNLGHPYWLTLAPMYIWFIIFFIQPHKEERFLFPVYPLICLCGAVALSALQKCYHFVFQRYRLEHYTVTSNWLALGTVFLFGLLSFSRSVALFRGYHGPLDLYPEFYRIATDPTIHTVPEGRPVNVCVGKEWYRFPSSFLLPDNWQLQFIPSEFRGQLPKPFAEGPLATRTVPTHMNDQNREEPSRYIDISKCHYLVDLDTMRETPREPNYSSHREEWVSLAHRPFLDASRSSKLLRAFYVPFLSDQYTVYVNYTILKPRKAKPSRKKSGG.

The segment covering 1–10 (MASRRARQRL) has biased composition (basic residues). The segment at 1–51 (MASRRARQRLKGGGGGGGGGGDAGPAAEKLEQLGSREAGAEPRPESGNKAG) is disordered. Residues 1–135 (MASRRARQRL…FHARILQTNK (135 aa)) are Lumenal-facing. A compositionally biased stretch (gly residues) spans 11-23 (KGGGGGGGGGGDA). N77 carries N-linked (GlcNAc...) asparagine glycosylation. A helical transmembrane segment spans residues 136–156 (ILVFYFLRCLLAFVSCVCELY). Topologically, residues 157-171 (FYKAVCKKFGLHVSR) are cytoplasmic. Residues 172-192 (MMLAFLVLSTGMFCSSSAFLP) form a helical membrane-spanning segment. The Lumenal portion of the chain corresponds to 193–213 (SSFCMYTTLIAMTGWYMDKTP). The helical transmembrane segment at 214–234 (IAVLGVAAGAILGWPFSAALG) threads the bilayer. Topologically, residues 235 to 249 (LPIAFDLLARKHRWK) are cytoplasmic. Residues 250–270 (SFLLWSLVALALFLVPVVVID) form a helical membrane-spanning segment. The Lumenal segment spans residues 271–310 (SYYYGKLVVAPLNIVLYNVFTSHGPDLYGTEPWYFYLING). The chain crosses the membrane as a helical span at residues 311–331 (FLNFNVAFALALLVLPLTFLM). At 332 to 342 (EYLLQRFHVQN) the chain is on the cytoplasmic side. Residues 343-363 (LGHPYWLTLAPMYIWFIIFFI) form a helical membrane-spanning segment. Topologically, residues 364-370 (QPHKEER) are lumenal. Residues 371-391 (FLFPVYPLICLCGAVALSALQ) form a helical membrane-spanning segment. The Cytoplasmic portion of the chain corresponds to 392–405 (KCYHFVFQRYRLEH). Residues 406-426 (YTVTSNWLALGTVFLFGLLSF) traverse the membrane as a helical segment. Over 427–611 (SRSVALFRGY…AKPSRKKSGG (185 aa)) the chain is Lumenal. 2 N-linked (GlcNAc...) asparagine glycosylation sites follow: N550 and N593.

It belongs to the glycosyltransferase 22 family.

Its subcellular location is the endoplasmic reticulum membrane. It catalyses the reaction an alpha-D-Man-(1-&gt;2)-alpha-D-Man-(1-&gt;2)-alpha-D-Man-(1-&gt;3)-[alpha-D-Man-(1-&gt;3)-alpha-D-Man-(1-&gt;6)]-beta-D-Man-(1-&gt;4)-beta-D-GlcNAc-(1-&gt;4)-alpha-D-GlcNAc-diphospho-di-trans,poly-cis-dolichol + a di-trans,poly-cis-dolichyl beta-D-mannosyl phosphate = an alpha-D-Man-(1-&gt;2)-alpha-D-Man-(1-&gt;2)-alpha-D-Man-(1-&gt;3)-[alpha-D-Man-(1-&gt;2)-alpha-D-Man-(1-&gt;3)-alpha-D-Man-(1-&gt;6)]-beta-D-Man-(1-&gt;4)-beta-D-GlcNAc-(1-&gt;4)-alpha-D-GlcNAc-diphospho-di-trans,poly-cis-dolichol + a di-trans,poly-cis-dolichyl phosphate + H(+). It carries out the reaction an alpha-D-Man-(1-&gt;2)-alpha-D-Man-(1-&gt;2)-alpha-D-Man-(1-&gt;3)-[alpha-D-Man-(1-&gt;2)-alpha-D-Man-(1-&gt;3)-[alpha-D-Man-(1-&gt;6)]-alpha-D-Man-(1-&gt;6)]-beta-D-Man-(1-&gt;4)-beta-D-GlcNAc-(1-&gt;4)-alpha-D-GlcNAc-diphospho-di-trans,poly-cis-dolichol + a di-trans,poly-cis-dolichyl beta-D-mannosyl phosphate = an alpha-D-Man-(1-&gt;2)-alpha-D-Man-(1-&gt;2)-alpha-D-Man-(1-&gt;3)-[alpha-D-Man-(1-&gt;2)-alpha-D-Man-(1-&gt;3)-[alpha-D-Man-(1-&gt;2)-alpha-D-Man-(1-&gt;6)]-alpha-D-Man-(1-&gt;6)]-beta-D-Man-(1-&gt;4)-beta-D-GlcNAc-(1-&gt;4)-alpha-D-GlcNAc-diphospho-di-trans,poly-cis-dolichol + a di-trans,poly-cis-dolichyl phosphate + H(+). Its pathway is protein modification; protein glycosylation. Its function is as follows. Mannosyltransferase that operates in the biosynthetic pathway of dolichol-linked oligosaccharides, the glycan precursors employed in protein asparagine (N)-glycosylation. The assembly of dolichol-linked oligosaccharides begins on the cytosolic side of the endoplasmic reticulum membrane and finishes in its lumen. The sequential addition of sugars to dolichol pyrophosphate produces dolichol-linked oligosaccharides containing fourteen sugars, including two GlcNAcs, nine mannoses and three glucoses. Once assembled, the oligosaccharide is transferred from the lipid to nascent proteins by oligosaccharyltransferases. In the lumen of the endoplasmic reticulum, catalyzes the addition of the seventh and ninth alpha-1,2-linked mannose residues to Man(6)GlcNAc(2)-PP-dolichol and Man(8)GlcNAc(2)-PP-dolichol respectively. The protein is Alpha-1,2-mannosyltransferase ALG9 of Mus musculus (Mouse).